The primary structure comprises 125 residues: Small ribosomal subunit protein uS13 (125 aa).

Residues 97 to 125 form a disordered region; the sequence is PLRGQRTKTNARTRKGKRKTVANKKMASK.

Belongs to the universal ribosomal protein uS13 family. In terms of assembly, part of the 30S ribosomal subunit. Forms a loose heterodimer with protein S19. Forms two bridges to the 50S subunit in the 70S ribosome.

Its function is as follows. Located at the top of the head of the 30S subunit, it contacts several helices of the 16S rRNA. In the 70S ribosome it contacts the 23S rRNA (bridge B1a) and protein L5 of the 50S subunit (bridge B1b), connecting the 2 subunits; these bridges are implicated in subunit movement. Contacts the tRNAs in the A and P-sites. In Borrelia hermsii (strain HS1 / DAH), this protein is Small ribosomal subunit protein uS13.